A 497-amino-acid chain; its full sequence is Subtilisin-like protease CPC735_031240 (497 aa).

The signal sequence occupies residues 1-16; the sequence is MKGVLSLSLLPLLAAP. The propeptide occupies 17-136; it reads SPILVDTIHR…IEKDSEVHAW (120 aa). The Inhibitor I9 domain occupies 43 to 134; the sequence is SYIVVFKKNV…QYIEKDSEVH (92 aa). Residues 146–452 enclose the Peptidase S8 domain; that stretch reads PWGLARVSHR…GGSSNYTAII (307 aa). Active-site charge relay system residues include Asp-182 and His-214. N-linked (GlcNAc...) asparagine glycans are attached at residues Asn-244 and Asn-284. The Charge relay system role is filled by Ser-380. Asn-447 carries an N-linked (GlcNAc...) asparagine glycan.

It belongs to the peptidase S8 family.

Its subcellular location is the secreted. Secreted subtilisin-like serine protease with keratinolytic activity that contributes to pathogenicity. The protein is Subtilisin-like protease CPC735_031240 of Coccidioides posadasii (strain C735) (Valley fever fungus).